Here is a 132-residue protein sequence, read N- to C-terminus: Movement protein TGB3 (132 aa).

At 1 to 11 (MVLVVKVDLSN) the chain is on the cytoplasmic side. Residues 12–32 (IVLYIVAGCVVVSMLYSPFFS) traverse the membrane as a helical segment. At 33–109 (NDVKASSYAG…TETLFIILSR (77 aa)) the chain is on the lumenal side. Residues 110–130 (LFGLAVFLFMICLMSIVWFWC) traverse the membrane as a helical segment. The Cytoplasmic portion of the chain corresponds to 131–132 (HR).

It belongs to the benyvirus TGB3 movement protein family. In terms of assembly, interacts with movement proteins TGB1 and TGB2.

It is found in the host cell junction. The protein localises to the host plasmodesma. The protein resides in the host endoplasmic reticulum membrane. Its function is as follows. Participates in the transport of viral RNA to the plasmodesmata. TGBp3 most probably contains signals of plasmodesmata targeting is therefore involved in the targeting of TGBp2, and viral RNAs-TGBp1 (RNP complex), to plasmodesmata. Can gate plasmodesmata and increase their size exclusion limit. This Beta macrocarpa (Beet) protein is Movement protein TGB3.